Consider the following 314-residue polypeptide: Taste receptor type 2 member 42 (314 aa).

Residues 1–7 are Extracellular-facing; the sequence is MATELDK. Residues 8-28 form a helical membrane-spanning segment; sequence IFLILAIAEFIISMLGNVFIG. Over 29–50 the chain is Cytoplasmic; it reads LVNCSEGIKNQKVFSADFILTC. A helical transmembrane segment spans residues 51–71; that stretch reads LAISTIGQLLVILFDSFLVGL. Residues 72 to 101 are Extracellular-facing; it reads ASHLYTTYRLGKTVIMLWHMTNHLTTWLAT. The chain crosses the membrane as a helical span at residues 102 to 122; it reads CLSIFYFFKIAHFPHSLFLWL. The Cytoplasmic portion of the chain corresponds to 123-127; that stretch reads RWRMN. Residues 128 to 148 form a helical membrane-spanning segment; it reads GMIVMLLILSLFLLIFDSLVL. The Extracellular segment spans residues 149–187; sequence EIFIDISLNIIDKSNLTLYLDESKTLYDKLSILKTLLSL. An N-linked (GlcNAc...) asparagine glycan is attached at Asn-163. A helical membrane pass occupies residues 188–208; sequence TSFIPFSLFLTSLLFLFLSLV. The Cytoplasmic portion of the chain corresponds to 209–238; sequence RHTRNLKLSSLGSRDSSTEAHRRAMKMVMS. The chain crosses the membrane as a helical span at residues 239–259; sequence FLFLFIVHFFSLQVANWIFFM. The Extracellular portion of the chain corresponds to 260–265; sequence LWNNKC. The chain crosses the membrane as a helical span at residues 266–286; that stretch reads IKFVMLALNAFPSCHSFILIL. At 287-314 the chain is on the cytoplasmic side; the sequence is GNSKLQQTAVRLLWHLRNYTKTPNPLPL.

The protein belongs to the G-protein coupled receptor T2R family.

It is found in the membrane. In terms of biological role, receptor that may play a role in the perception of bitterness and is gustducin-linked. May play a role in sensing the chemical composition of the gastrointestinal content. The activity of this receptor may stimulate alpha gustducin, mediate PLC-beta-2 activation and lead to the gating of TRPM5. The protein is Taste receptor type 2 member 42 (TAS2R42) of Homo sapiens (Human).